A 119-amino-acid chain; its full sequence is Large ribosomal subunit protein bL17 (119 aa).

This sequence belongs to the bacterial ribosomal protein bL17 family. As to quaternary structure, part of the 50S ribosomal subunit. Contacts protein L32.

In Acholeplasma laidlawii (strain PG-8A), this protein is Large ribosomal subunit protein bL17.